We begin with the raw amino-acid sequence, 280 residues long: Nucleotide-binding protein Swoo_4243 (280 aa).

Residue 8 to 15 (GRSGSGKS) coordinates ATP. Residue 56–59 (DVRN) participates in GTP binding.

This sequence belongs to the RapZ-like family.

Displays ATPase and GTPase activities. This is Nucleotide-binding protein Swoo_4243 from Shewanella woodyi (strain ATCC 51908 / MS32).